A 199-amino-acid polypeptide reads, in one-letter code: SCO2-like protein RC0042 (199 aa).

It belongs to the SCO1/2 family.

In Rickettsia conorii (strain ATCC VR-613 / Malish 7), this protein is SCO2-like protein RC0042.